A 380-amino-acid chain; its full sequence is MKNEMLALILAGGQGTRLGKLTQSIAKPAVQFGGRYRIIDFALSNCANSGIHNVGVITQYQPLALNSHIGNGSSWGLDGINTGVSILQPYSASEGNRWFEGTSHAIFQNIDYIDSINPEYVLILSGDHIYKMDYDDMLQSHKDNNASLTVAVLDVPLKEASRFGIMNTDANNRIVEFEEKPENPKSTKASMGIYIFDWQRLRNMLVVAEKSNVDMSDFGKNVIPNYLESGESVYAYEFAGYWKDVGTVESLWEANMEYINPENALDSRNRRWKIYSRNLISPPNFLSENAKVEDSLVVDGCFVDGTVKHSILSTGAQVRKDAVIEDSVIMSGAIIGQGAKIKRAIIGEGAIIAEGVEIDGTEEVFVVGYNEKVGVPKDED.

Alpha-D-glucose 1-phosphate-binding positions include glycine 164, 179–180 (EK), and serine 190.

Belongs to the bacterial/plant glucose-1-phosphate adenylyltransferase family. In terms of assembly, homotetramer.

It catalyses the reaction alpha-D-glucose 1-phosphate + ATP + H(+) = ADP-alpha-D-glucose + diphosphate. It participates in glycan biosynthesis; glycogen biosynthesis. Functionally, involved in the biosynthesis of ADP-glucose, a building block required for the elongation reactions to produce glycogen. Catalyzes the reaction between ATP and alpha-D-glucose 1-phosphate (G1P) to produce pyrophosphate and ADP-Glc. The protein is Glucose-1-phosphate adenylyltransferase of Streptococcus gordonii (strain Challis / ATCC 35105 / BCRC 15272 / CH1 / DL1 / V288).